Here is a 454-residue protein sequence, read N- to C-terminus: Gastrin/cholecystokinin type B receptor (454 aa).

Topologically, residues 1 to 57 (MELLKPNRSVLGSGPGPGASLCRSGGPLLNGSGTGNLSCEPPRIRGAGTRELELAIR) are extracellular. N-linked (GlcNAc...) asparagine glycosylation is found at N7, N30, and N36. The chain crosses the membrane as a helical span at residues 58–79 (VTLYAVIFLMSVGGNVLIIVVL). Residues 80–87 (GLSRRLRT) are Cytoplasmic-facing. Residues 88–109 (VTNAFLLSLAVSDLLLAVACMP) traverse the membrane as a helical segment. The Extracellular portion of the chain corresponds to 110–131 (FTLLPNLMGTFIFGTVVCKAVS). C127 and C205 are joined by a disulfide. The helical transmembrane segment at 132–150 (YFMGVSVSVSTLSLVAIAL) threads the bilayer. Topologically, residues 151 to 170 (ERYSAICRPLQARVWQTRSH) are cytoplasmic. The helical transmembrane segment at 171–189 (AARVIVATWMLSGLLMVPY) threads the bilayer. The Extracellular segment spans residues 190-219 (PVYTAVQPAGPRVLQCMHRWPSARVRQTWS). Residues 220–242 (VLLLLLLFFVPGVVMAVAYGLIS) form a helical membrane-spanning segment. The Cytoplasmic segment spans residues 243 to 340 (RELYLGLRFD…KLLAKKRVVR (98 aa)). Residues 257–284 (SESQSRVGSQGGLPGGTGQGPAQANGRC) are disordered. The segment covering 265 to 275 (SQGGLPGGTGQ) has biased composition (gly residues). A helical transmembrane segment spans residues 341-362 (MLLVIVVLFFLCWLPVYSANTW). Over 363–380 (RAFDGPGAHRALSGAPIS) the chain is Extracellular. A helical transmembrane segment spans residues 381 to 401 (FIHLLTYASACVNPLVYCFMH). Residues 402-454 (RRFRQACLDTCTRCCPRPPRARPRPLPDEDPPTPSIASLSRLSYTTISTLGPG) are Cytoplasmic-facing. C415 carries S-palmitoyl cysteine lipidation. The tract at residues 422–441 (ARPRPLPDEDPPTPSIASLS) is disordered.

The protein belongs to the G-protein coupled receptor 1 family.

It is found in the cell membrane. Receptor for gastrin and cholecystokinin. The CCK-B receptors occur throughout the central nervous system where they modulate anxiety, analgesia, arousal, and neuroleptic activity. This receptor mediates its action by association with G proteins that activate a phosphatidylinositol-calcium second messenger system. In Bos taurus (Bovine), this protein is Gastrin/cholecystokinin type B receptor (CCKBR).